Consider the following 450-residue polypeptide: Phosphoglucosamine mutase (450 aa).

Ser-102 (phosphoserine intermediate) is an active-site residue. Residues Ser-102, Asp-244, Asp-246, and Asp-248 each contribute to the Mg(2+) site. Ser-102 is modified (phosphoserine).

Belongs to the phosphohexose mutase family. It depends on Mg(2+) as a cofactor. Activated by phosphorylation.

It catalyses the reaction alpha-D-glucosamine 1-phosphate = D-glucosamine 6-phosphate. Functionally, catalyzes the conversion of glucosamine-6-phosphate to glucosamine-1-phosphate. The chain is Phosphoglucosamine mutase from Bartonella bacilliformis (strain ATCC 35685 / KC583 / Herrer 020/F12,63).